Consider the following 198-residue polypeptide: Syndecan-4 (198 aa).

Positions 1–18 (MAPARLFALLLLFVGGVA) are cleaved as a signal peptide. Residues 19 to 145 (ESIRETEVID…QGSNIFERTE (127 aa)) are Extracellular-facing. Residues S39, S61, and S63 are each glycosylated (O-linked (Xyl...) (glycosaminoglycan) serine). An O-linked (Xyl...) (chondroitin sulfate) serine glycan is attached at S95. Residues 146 to 170 (VLAALIVGGIVGILFAVFLILLLMY) form a helical membrane-spanning segment. Residues 171 to 198 (RMKKKDEGSYDLGKKPIYKKAPTNEFYA) lie on the Cytoplasmic side of the membrane.

This sequence belongs to the syndecan proteoglycan family. Homodimer. Interacts with CDCP1 and SDCBP. Interacts (via its cytoplasmic domain) with GIPC (via its PDZ domain). Interacts (via its cytoplasmic domain) with NUDT16L1. Interacts with DNM2; this interaction is markedly enhanced at focal ahesion site upon induction of focal adhesions and stress-fiber formation. In terms of processing, shedding is enhanced by a number of factors such as heparanase, thrombin or EGF. Also by stress and wound healing. PMA-mediated shedding is inhibited by TIMP3. O-glycosylated; contains both chondroitin sulfate and heparan sulfate. Ser-39, Ser-61 and Ser-63 can all be modified by either chondroitin sulfate or heparan sulfate, and the protein exists in forms that contain only chondroitin sulfate, only heparan sulfate and both chondroitin sulfate and heparan sulfate.

Its subcellular location is the membrane. The protein localises to the secreted. Functionally, cell surface proteoglycan which regulates exosome biogenesis in concert with SDCBP and PDCD6IP. The sequence is that of Syndecan-4 from Pongo abelii (Sumatran orangutan).